A 171-amino-acid polypeptide reads, in one-letter code: uncharacterized protein (171 aa).

The HTH gntR-type domain occupies 30–97 (AGRVSAAYHA…PKKGIIICAL (68 aa)). The H-T-H motif DNA-binding region spans 57-76 (EIEIARQLGMSRTPVHEAMA).

This is an uncharacterized protein from Agrobacterium vitis (Rhizobium vitis).